A 706-amino-acid polypeptide reads, in one-letter code: Transmembrane and coiled-coil domains protein 2 (706 aa).

2 disordered regions span residues 1-221 (MKRC…TTDT) and 251-280 (VALSLPSGPGHGDSDGPISLDVPDGAPDPQ). A Phosphoserine modification is found at serine 6. The span at 83–94 (GLKHLFHSRRRS) shows a compositional bias: basic residues. A compositionally biased stretch (low complexity) spans 102 to 112 (SQEAQQQQQQQ). Positions 120 to 131 (PDEKERSPEMHR) are enriched in basic and acidic residues. Arginine 163 bears the Omega-N-methylarginine mark. Residues 330–365 (KQVFEKKNQKSAQTIAQLHKKLEHYRRRLKEIEQNG) are a coiled coil. Serine 435 carries the phosphoserine modification. A disordered region spans residues 440-459 (AHLKDPMEDGPPEEAARALS). Phosphoserine is present on residues serine 461 and serine 467. The disordered stretch occupies residues 464–510 (LVSSPKYGSDDECSSASASSAGAGSNSGAGPGGALGSPRSNTLYGAP). Low complexity predominate over residues 477 to 487 (SSASASSAGAG). Residues 488–498 (SNSGAGPGGAL) show a composition bias toward gly residues. Serine 500 carries the post-translational modification Phosphoserine. The stretch at 511 to 630 (GNLDTLLEEL…QQQQVVQLEG (120 aa)) forms a coiled coil. 2 consecutive transmembrane segments (helical) span residues 646 to 666 (VILALMAVLLVFVSTIANFIT) and 679 to 699 (ALLLLVLFLLWKHWASLTYLL).

Belongs to the TEX28 family. May form homodimers and heterodimers with TMCC2 or TMCC3 via the coiled-coil domains. Interacts with ribosomal proteins RPL4 and RPS6. Interacts with APOE and proteolytic processed C-terminal fragment C99 of the amyloid precursor protein (APP C99).

It is found in the endoplasmic reticulum membrane. In terms of biological role, may be involved in the regulation of the proteolytic processing of the amyloid precursor protein (APP) possibly also implicating APOE. The protein is Transmembrane and coiled-coil domains protein 2 of Mus musculus (Mouse).